Consider the following 872-residue polypeptide: Probable LRR receptor-like serine/threonine-protein kinase At1g51880 (872 aa).

An N-terminal signal peptide occupies residues 1-23 (MKSIHGFLLFLITAYVILESVQA). Residues 24-513 (QDQLGFISLD…GKSKKVPMIP (490 aa)) are Extracellular-facing. 9 N-linked (GlcNAc...) asparagine glycosylation sites follow: N40, N49, N96, N181, N255, N268, N294, N339, and N401. LRR repeat units follow at residues 411 to 434 (RIIS…SKLT), 435 to 457 (QLIE…FADM), and 459 to 482 (LLKL…IQQR). N-linked (GlcNAc...) asparagine glycosylation is found at N464 and N472. The helical transmembrane segment at 514 to 534 (IVASVAGVFALLVILAIFFVV) threads the bilayer. Residues 535-872 (RRKNGESNKG…SASEFSPGAR (338 aa)) lie on the Cytoplasmic side of the membrane. T557 is modified (phosphothreonine). Residues 566–838 (NNFERVLGKG…HVVTELNECV (273 aa)) form the Protein kinase domain. Residues 572–580 (LGKGGFGTV) and K593 contribute to the ATP site. Y638 bears the Phosphotyrosine mark. D690 serves as the catalytic Proton acceptor. S724 carries the phosphoserine modification. Phosphothreonine occurs at positions 725 and 730. Y738 bears the Phosphotyrosine mark.

This sequence belongs to the protein kinase superfamily. Ser/Thr protein kinase family.

It is found in the membrane. It catalyses the reaction L-seryl-[protein] + ATP = O-phospho-L-seryl-[protein] + ADP + H(+). The catalysed reaction is L-threonyl-[protein] + ATP = O-phospho-L-threonyl-[protein] + ADP + H(+). This chain is Probable LRR receptor-like serine/threonine-protein kinase At1g51880, found in Arabidopsis thaliana (Mouse-ear cress).